The sequence spans 82 residues: Small ribosomal subunit protein bS16 (82 aa).

The protein belongs to the bacterial ribosomal protein bS16 family.

The chain is Small ribosomal subunit protein bS16 from Dehalococcoides mccartyi (strain ATCC BAA-2266 / KCTC 15142 / 195) (Dehalococcoides ethenogenes (strain 195)).